A 156-amino-acid chain; its full sequence is Small ribosomal subunit protein uS7 (156 aa).

Belongs to the universal ribosomal protein uS7 family. As to quaternary structure, part of the 30S ribosomal subunit. Contacts proteins S9 and S11.

Functionally, one of the primary rRNA binding proteins, it binds directly to 16S rRNA where it nucleates assembly of the head domain of the 30S subunit. Is located at the subunit interface close to the decoding center, probably blocks exit of the E-site tRNA. The polypeptide is Small ribosomal subunit protein uS7 (Prochlorococcus marinus (strain MIT 9312)).